The following is a 605-amino-acid chain: Capsid scaffolding protein (605 aa).

Active-site charge relay system residues include H52, S120, and H139. An interaction with pAP region spans residues 326-344 (GEFVLIPTAYYSQLLTGQT). The interval 585–605 (IQGSTADDADMFANQMMVGRC) is interaction with major capsid protein.

The protein belongs to the herpesviridae capsid scaffolding protein family. Homomultimer. Interacts with major capsid protein. As to quaternary structure, exists in a monomer-dimer equilibrium with the dimer being the active species. Post-translationally, capsid scaffolding protein is cleaved by assemblin after formation of the spherical procapsid. As a result, the capsid obtains its mature, icosahedral shape. Cleavages occur at two or more sites: release (R-site) and maturation (M-site).

It localises to the host cytoplasm. It is found in the host nucleus. The catalysed reaction is Cleaves -Ala-|-Ser- and -Ala-|-Ala- bonds in the scaffold protein.. Its function is as follows. Acts as a scaffold protein by binding major capsid protein in the cytoplasm, inducing the nuclear localization of both proteins. Multimerizes in the nucleus such as major capsid protein forms the icosahedral T=16 capsid. Autocatalytic cleavage releases the assembly protein, and subsequently abolishes interaction with major capsid protein. Cleavages products are evicted from the capsid before or during DNA packaging. Functionally, protease that plays an essential role in virion assembly within the nucleus. Catalyzes the cleavage of the assembly protein after formation of the spherical procapsid. By that cleavage, the capsid matures and gains its icosahedral shape. The cleavage sites seem to include -Ala-Ser-, -Ala-Ala-, as well as Ala-Thr bonds. Assemblin and cleavages products are evicted from the capsid before or during DNA packaging. Plays a major role in capsid assembly. Acts as a scaffold protein by binding major capsid protein. Multimerizes in the nucleus such as major capsid protein forms the icosahedral T=16 capsid. Cleaved by assemblin after capsid completion. The cleavages products are evicted from the capsid before or during DNA packaging. The protein is Capsid scaffolding protein (33) of Varicella-zoster virus (strain Dumas) (HHV-3).